Here is a 456-residue protein sequence, read N- to C-terminus: tRNA-2-methylthio-N(6)-dimethylallyladenosine synthase (456 aa).

Residues 6 to 125 (KRLFIKTYGC…LPELIAQAHR (120 aa)) form the MTTase N-terminal domain. Residues cysteine 15, cysteine 51, cysteine 88, cysteine 163, cysteine 167, and cysteine 170 each contribute to the [4Fe-4S] cluster site. One can recognise a Radical SAM core domain in the interval 149 to 385 (QVEGYSAFVT…QELLSDQQAA (237 aa)). Positions 388-450 (ESMIGRTLPV…RNSLSGSLTG (63 aa)) constitute a TRAM domain.

This sequence belongs to the methylthiotransferase family. MiaB subfamily. In terms of assembly, monomer. It depends on [4Fe-4S] cluster as a cofactor.

The protein resides in the cytoplasm. It catalyses the reaction N(6)-dimethylallyladenosine(37) in tRNA + (sulfur carrier)-SH + AH2 + 2 S-adenosyl-L-methionine = 2-methylsulfanyl-N(6)-dimethylallyladenosine(37) in tRNA + (sulfur carrier)-H + 5'-deoxyadenosine + L-methionine + A + S-adenosyl-L-homocysteine + 2 H(+). Its function is as follows. Catalyzes the methylthiolation of N6-(dimethylallyl)adenosine (i(6)A), leading to the formation of 2-methylthio-N6-(dimethylallyl)adenosine (ms(2)i(6)A) at position 37 in tRNAs that read codons beginning with uridine. This chain is tRNA-2-methylthio-N(6)-dimethylallyladenosine synthase, found in Maricaulis maris (strain MCS10) (Caulobacter maris).